The following is a 432-amino-acid chain: MKRKTIDIITLGCSKNLVDSEQLMRQLEEAGYDVTHDSEKPTGEIAVINTCGFIGDAKEESINMILEFAQEKEEGNLEKLFVMGCLSERYLKELAIEIPQVDKFYGKFNWKGLLQDLGKAYHEELHIERTLTTPKHYAYLKISEGCDRKCSYCAIPIITGRHVSRPIEEILDEVRYLVSNGVKEFQVIAQELTYYGVDLYKKQMLPELIERISEIPGVEWIRLHYAYPAHFPEELFRVMRERDNVCKYMDIALQHISDNMLQRMRRHVTKKETYRLIEQFRKEVPGIHLRTTLMVGHPGETEGDFEELKEFVRKVRFDRMGAFTYSEEEGTYAAANYEDSIPQELKQARLDELMAIQQGISTELSASKVGQKMKVIIDRIEGEYYIGRTEFDSPEVDPEVLIRCEGDNLMIGNFYQVQVIDSDEFDLFGEII.

The region spanning 4-122 is the MTTase N-terminal domain; the sequence is KTIDIITLGC…LLQDLGKAYH (119 aa). C13, C51, C85, C146, C150, and C153 together coordinate [4Fe-4S] cluster. One can recognise a Radical SAM core domain in the interval 132–363; it reads TTPKHYAYLK…MAIQQGISTE (232 aa). One can recognise a TRAM domain in the interval 366–432; the sequence is ASKVGQKMKV…DEFDLFGEII (67 aa).

The protein belongs to the methylthiotransferase family. RimO subfamily. It depends on [4Fe-4S] cluster as a cofactor.

Its subcellular location is the cytoplasm. The enzyme catalyses L-aspartate(89)-[ribosomal protein uS12]-hydrogen + (sulfur carrier)-SH + AH2 + 2 S-adenosyl-L-methionine = 3-methylsulfanyl-L-aspartate(89)-[ribosomal protein uS12]-hydrogen + (sulfur carrier)-H + 5'-deoxyadenosine + L-methionine + A + S-adenosyl-L-homocysteine + 2 H(+). Its function is as follows. Catalyzes the methylthiolation of an aspartic acid residue of ribosomal protein uS12. The sequence is that of Ribosomal protein uS12 methylthiotransferase RimO from Bacteroides fragilis (strain ATCC 25285 / DSM 2151 / CCUG 4856 / JCM 11019 / LMG 10263 / NCTC 9343 / Onslow / VPI 2553 / EN-2).